The following is a 251-amino-acid chain: Flap endonuclease Xni (251 aa).

Positions 51 to 72 (EDDRSDSWRHQSLPDYKAGRSP) are disordered. D104 is a Mg(2+) binding site. In terms of domain architecture, 5'-3' exonuclease spans 160-249 (VLPHQLPDYW…LSGNLQQLRL (90 aa)). K(+)-binding residues include L171, A172, P180, V182, and I185. The segment at 184 to 189 (GIGAKT) is interaction with DNA.

The protein belongs to the Xni family. Mg(2+) serves as cofactor. Requires K(+) as cofactor.

Functionally, has flap endonuclease activity. During DNA replication, flap endonucleases cleave the 5'-overhanging flap structure that is generated by displacement synthesis when DNA polymerase encounters the 5'-end of a downstream Okazaki fragment. This is Flap endonuclease Xni from Yersinia enterocolitica serotype O:8 / biotype 1B (strain NCTC 13174 / 8081).